Here is a 284-residue protein sequence, read N- to C-terminus: GPN-loop GTPase 3 (284 aa).

13–18 (GSGKST) serves as a coordination point for GTP. The Gly-Pro-Asn (GPN)-loop; involved in dimer interface motif lies at 72–74 (GPN). GTP is bound at residue 174–177 (TKMD). Residues 261–284 (KEPKEHEEESSSMFDEYFQERQNE) are disordered.

It belongs to the GPN-loop GTPase family. In terms of assembly, heterodimer with GPN1. Binds to RNA polymerase II (RNAPII). Interacts directly with subunits RPB4 and RPB7 and the CTD of RPB1.

Its function is as follows. Small GTPase required for proper localization of RNA polymerase II (RNAPII). May act at an RNAP assembly step prior to nuclear import. The protein is GPN-loop GTPase 3 of Rattus norvegicus (Rat).